We begin with the raw amino-acid sequence, 252 residues long: Thiamine thiazole synthase (252 aa).

Residues Ser-35, 54–55, Gly-62, Val-126, and 152–154 contribute to the NAD(+) site; these read EK and HVD. Residues Asp-154 and His-169 each contribute to the Fe cation site. Met-217 lines the NAD(+) pocket. Arg-227 is a binding site for glycine.

The protein belongs to the THI4 family. As to quaternary structure, homooctamer; tetramer of dimers. Fe(2+) is required as a cofactor.

It catalyses the reaction hydrogen sulfide + glycine + NAD(+) = ADP-5-ethyl-4-methylthiazole-2-carboxylate + nicotinamide + 3 H2O + H(+). The protein operates within cofactor biosynthesis; thiamine diphosphate biosynthesis. Functionally, involved in the biosynthesis of the thiazole moiety of thiamine. Catalyzes the conversion of NAD and glycine to adenosine diphosphate 5-(2-hydroxyethyl)-4-methylthiazole-2-carboxylate (ADT), an adenylated thiazole intermediate, using free sulfide as a source of sulfur. The polypeptide is Thiamine thiazole synthase (Pyrococcus abyssi (strain GE5 / Orsay)).